We begin with the raw amino-acid sequence, 177 residues long: Interleukin-1 receptor antagonist protein (177 aa).

A signal peptide spans 1–25 (MEICRGLRSHLITLLLFLFHSETIC). The cysteines at positions 91 and 141 are disulfide-linked. An N-linked (GlcNAc...) asparagine glycan is attached at N109.

It belongs to the IL-1 family. As to expression, the intracellular form of IL1RN is predominantly expressed in epithelial cells.

The protein resides in the secreted. It localises to the cytoplasm. Functionally, anti-inflammatory antagonist of interleukin-1 family of proinflammatory cytokines such as interleukin-1beta/IL1B and interleukin-1alpha/IL1A. Protects from immune dysregulation and uncontrolled systemic inflammation triggered by IL1 for a range of innate stimulatory agents such as pathogens. In Homo sapiens (Human), this protein is Interleukin-1 receptor antagonist protein (IL1RN).